The primary structure comprises 356 residues: tRNA-specific 2-thiouridylase MnmA (356 aa).

Residue 6 to 13 (AVSGGTDS) participates in ATP binding. Cysteine 95 serves as the catalytic Nucleophile. Cysteines 95 and 195 form a disulfide. Glycine 119 is an ATP binding site. Residues 145-147 (KDQ) form an interaction with tRNA region. Residue cysteine 195 is the Cysteine persulfide intermediate of the active site. The segment at 300 to 301 (RY) is interaction with tRNA.

The protein belongs to the MnmA/TRMU family.

The protein resides in the cytoplasm. The enzyme catalyses S-sulfanyl-L-cysteinyl-[protein] + uridine(34) in tRNA + AH2 + ATP = 2-thiouridine(34) in tRNA + L-cysteinyl-[protein] + A + AMP + diphosphate + H(+). In terms of biological role, catalyzes the 2-thiolation of uridine at the wobble position (U34) of tRNA, leading to the formation of s(2)U34. The sequence is that of tRNA-specific 2-thiouridylase MnmA from Oleidesulfovibrio alaskensis (strain ATCC BAA-1058 / DSM 17464 / G20) (Desulfovibrio alaskensis).